The following is a 175-amino-acid chain: Alpha-crystallin B chain (175 aa).

At Met1 the chain carries N-acetylmethionine. Ser19 is modified (phosphoserine). The O-linked (GlcNAc) serine glycan is linked to Ser41. A phosphoserine mark is found at Ser45 and Ser59. A sHSP domain is found at 56–164 (RAPSWFDTGL…PERTIPITRE (109 aa)). Position 83 (His83) interacts with Zn(2+). Residue Lys92 is modified to N6-acetyllysine; partial. Residues His104, Glu106, His111, and His119 each contribute to the Zn(2+) site. The interval 146–175 (NGPRKQVSGPERTIPITREEKPAVTAAPKK) is disordered. N6-acetyllysine is present on Lys166. Thr170 carries O-linked (GlcNAc) threonine glycosylation.

It belongs to the small heat shock protein (HSP20) family. Heteromer composed of three CRYAA and one CRYAB subunits. Aggregates with homologous proteins, including the small heat shock protein HSPB1, to form large heteromeric complexes. Inter-subunit bridging via zinc ions enhances stability, which is crucial as there is no protein turn over in the lens. Interacts with HSPBAP1 and TTN/titin. Interacts with TMEM109; in the cellular response to DNA damage. Interacts with DES; binds rapidly during early stages of DES filament assembly and a reduced binding seen in the later stages. Interacts with TMED10; the interaction mediates the translocation from the cytoplasm into the ERGIC (endoplasmic reticulum-Golgi intermediate compartment) and thereby secretion. Interacts with ATP6V1A and with MTOR, forming a ternary complex. Lens as well as other tissues. Expressed in myocardial tissue.

It is found in the cytoplasm. The protein localises to the nucleus. It localises to the secreted. The protein resides in the lysosome. Functionally, may contribute to the transparency and refractive index of the lens. Has chaperone-like activity, preventing aggregation of various proteins under a wide range of stress conditions. In lens epithelial cells, stabilizes the ATP6V1A protein, preventing its degradation by the proteasome. This chain is Alpha-crystallin B chain, found in Homo sapiens (Human).